Reading from the N-terminus, the 20-residue chain is Thylakoid lumenal 14.7 kDa protein (20 aa).

The interval 1–20 (KTGVNKPELLPKEETTVIDV) is disordered. Residues 9-20 (LLPKEETTVIDV) are compositionally biased toward basic and acidic residues.

It is found in the plastid. The protein localises to the chloroplast thylakoid lumen. The chain is Thylakoid lumenal 14.7 kDa protein from Spinacia oleracea (Spinach).